The primary structure comprises 146 residues: Metallothiol transferase FosB (146 aa).

One can recognise a VOC domain in the interval glycine 4 to glycine 120. Residues histidine 7, histidine 66, and glutamate 116 each contribute to the Mg(2+) site. The Proton donor/acceptor role is filled by glutamate 116.

Belongs to the fosfomycin resistance protein family. FosB subfamily. In terms of assembly, homodimer. The cofactor is Mg(2+).

It localises to the cytoplasm. Metallothiol transferase which confers resistance to fosfomycin by catalyzing the addition of a thiol cofactor to fosfomycin. L-cysteine is probably the physiological thiol donor. The protein is Metallothiol transferase FosB of Shouchella clausii (strain KSM-K16) (Alkalihalobacillus clausii).